The primary structure comprises 272 residues: Short-chain dehydrogenase reductase ATA1 (272 aa).

14-38 (IITGGARGIGAATARLFTENGAYVI) serves as a coordination point for NADP(+). Residue S143 participates in substrate binding. Residue Y156 is the Proton acceptor of the active site. K160 serves as a coordination point for NADP(+).

Belongs to the short-chain dehydrogenases/reductases (SDR) family. In terms of tissue distribution, expressed specifically in tapetal cells.

Its function is as follows. May play a role in tapetum development. The polypeptide is Short-chain dehydrogenase reductase ATA1 (Arabidopsis thaliana (Mouse-ear cress)).